The sequence spans 77 residues: MSASAARGSTSLLKRAWNEIPDIVGGSALALAGIVMATIGVANYYAKDGDNRRYKLGYVVYRHDDPRALKVRNDEDD.

Residues 23-45 form a helical membrane-spanning segment; the sequence is IVGGSALALAGIVMATIGVANYY.

This sequence belongs to the complex I NDUFA3 subunit family. In terms of assembly, complex I is composed of 43 different subunits.

The protein resides in the mitochondrion inner membrane. Its subcellular location is the cytoplasm. It localises to the myofibril. The protein localises to the sarcomere. It is found in the z line. Its function is as follows. Accessory subunit of the mitochondrial membrane respiratory chain NADH dehydrogenase (Complex I), that is believed not to be involved in catalysis. Complex I functions in the transfer of electrons from NADH to the respiratory chain. The immediate electron acceptor for the enzyme is believed to be ubiquinone. Required for the maintenance of muscle integrity and for cell proliferation in the wing imaginal disc epithelium, possibly by interacting with the chaperone-assisted selective autophagy (CASA) pathway. The protein is NADH dehydrogenase [ubiquinone] 1 alpha subcomplex subunit 3 of Drosophila melanogaster (Fruit fly).